A 510-amino-acid chain; its full sequence is MARRGRRSLASPAVAIALFVFLAYGGGGGGGGVCEAAPASAVVKSVPGFDGALPSKHYAGYVTVEEQHGRNLFYYLVESERDPAKDPLVLWLNGGPGCSSFDGFVYEHGPFNFESGGSAKSLPKLHLNPYSWSKVSSVIYLDSPAGVGLSYSKNTSDYNTGDLKTAADSHTFLLKWFQLYPEFLSNPFYIAGESYAGVYVPTLSHEVVKGLHDGVKPTINFKGYMVGNGVCDTVFDGNALVPFAHGMALISDDIYQEAQTACHGNYWNTTTDKCENALYKVDTSINDLNIYDILEPCYHSKTIKKVTPANTKLPKSFQHLGTTTKPLAVRTRMHGRAWPLRAPVRAGRVPSWQEFARGSRPSGVPCMSDEVATAWLNNDDVRAAIHAQPVSSIGSWLICTNVLDFIHDAGSMISYHKNLTGQGYRAFIYSGDHDMCVPYTGTEAWTRSLGYGVIDSWRPWHLNGQVSGYTQGYEHGLTFATIKGAGHTVPEYKPQESLAFYSRWLAGSKL.

The N-terminal stretch at 1 to 25 is a signal peptide; that stretch reads MARRGRRSLASPAVAIALFVFLAYG. Positions 26 to 36 are excised as a propeptide; the sequence is GGGGGGGVCEA. Intrachain disulfides connect Cys-98–Cys-399, Cys-262–Cys-274, and Cys-297–Cys-366. Asn-154 carries N-linked (GlcNAc...) asparagine glycosylation. Residue Ser-194 is part of the active site. The N-linked (GlcNAc...) asparagine glycan is linked to Asn-268. Positions 303–362 are cleaved as a propeptide — linker peptide; sequence IKKVTPANTKLPKSFQHLGTTTKPLAVRTRMHGRAWPLRAPVRAGRVPSWQEFARGSRPS. The N-linked (GlcNAc...) asparagine glycan is linked to Asn-418. Active-site residues include Asp-434 and His-487. Residues 508-510 carry the Microbody targeting signal motif; that stretch reads SKL.

This sequence belongs to the peptidase S10 family.

It catalyses the reaction Release of a C-terminal amino acid with broad specificity.. The protein is Serine carboxypeptidase 1 (CBP1) of Oryza sativa subsp. japonica (Rice).